The following is a 908-amino-acid chain: PTS system glucose-specific EIICBA component (908 aa).

A PTS EIIC type-1; first part domain is found at 1–264 (MQISLVKIRN…YAPLWYTSAG (264 aa)). 5 helical membrane passes run 31-51 (LMIPIAVLPLAGIFLGIGDAI), 71-91 (GGNVVFANLPILFAVAIAITF), 100-120 (FSAFVFWATMNAFMSSLIIPV), 155-175 (VFGGIIVGALTAYLYNKFYAI), and 189-209 (FVPIICMTIAIPVALLLLMVW). The interval 265–450 (GSLQEIANQQ…VSQFTVAVPS (186 aa)) is unknown. The 152-residue stretch at 451–602 (LNPAQYSQGK…FNLATPGRGG (152 aa)) folds into the PTS EIIC type-1; second part domain. A run of 5 helical transmembrane segments spans residues 459–479 (GKFPFMLIGIPAAGLAMILAA), 487–507 (ASSIIGSAAFTSFLTGITEPF), 509–529 (FTFLFLAPWLFYGIHAVLAAV), 536–556 (LLSANVGQTFSGSFIDFILYG), and 571–591 (VPIIGIFLALIYFPTFYFLTI). The PTS EIIB type-1 domain maps to 631–713 (QIEAGMLLRA…QDIIQGKVNW (83 aa)). The active-site Phosphocysteine intermediate; for EIIB activity is Cys653. Residues 762 to 875 (DDTFKNRLVG…DPITPFIVMQ (114 aa)) enclose the PTS EIIA type-1 domain. His815 (tele-phosphohistidine intermediate; for EIIA activity) is an active-site residue.

It localises to the cell membrane. The enzyme catalyses N(pros)-phospho-L-histidyl-[protein] + D-glucose(out) = D-glucose 6-phosphate(in) + L-histidyl-[protein]. In terms of biological role, the phosphoenolpyruvate-dependent sugar phosphotransferase system (sugar PTS), a major carbohydrate active transport system, catalyzes the phosphorylation of incoming sugar substrates concomitantly with their translocation across the cell membrane. This system is involved in glucose transport. In Mycoplasma genitalium (strain ATCC 33530 / DSM 19775 / NCTC 10195 / G37) (Mycoplasmoides genitalium), this protein is PTS system glucose-specific EIICBA component (ptsG).